A 110-amino-acid polypeptide reads, in one-letter code: U1-lycotoxin-Ls1cc (110 aa).

The first 20 residues, 1–20 (MKFVLLFGVLLVTLFSYSSA), serve as a signal peptide directing secretion. Positions 21-44 (EMLDDFDQADEDELLSLIEKEEAR) are excised as a propeptide. Cystine bridges form between C47/C62, C54/C71, C61/C89, and C73/C87.

This sequence belongs to the neurotoxin 19 (CSTX) family. 03 subfamily. Expressed by the venom gland.

Its subcellular location is the secreted. The protein is U1-lycotoxin-Ls1cc of Lycosa singoriensis (Wolf spider).